The chain runs to 462 residues: L-seryl-tRNA(Sec) selenium transferase (462 aa).

K293 is subject to N6-(pyridoxal phosphate)lysine.

This sequence belongs to the SelA family. It depends on pyridoxal 5'-phosphate as a cofactor.

The protein localises to the cytoplasm. The catalysed reaction is L-seryl-tRNA(Sec) + selenophosphate + H(+) = L-selenocysteinyl-tRNA(Sec) + phosphate. The protein operates within aminoacyl-tRNA biosynthesis; selenocysteinyl-tRNA(Sec) biosynthesis; selenocysteinyl-tRNA(Sec) from L-seryl-tRNA(Sec) (bacterial route): step 1/1. Converts seryl-tRNA(Sec) to selenocysteinyl-tRNA(Sec) required for selenoprotein biosynthesis. The polypeptide is L-seryl-tRNA(Sec) selenium transferase (Clostridium botulinum (strain ATCC 19397 / Type A)).